Reading from the N-terminus, the 242-residue chain is Myogenic factor 6 (242 aa).

The segment at 30-63 (GSPLYPGSDGTLSPCQDQLPPEAGSDSSGEEHVL) is disordered. Positions 93–144 (DRRKAATLRERRRLKKINEAFEALKRRTVANPNQRLPKVEILRSAISYIERL) constitute a bHLH domain. Positions 190–210 (ASDHSRALGGSPKAGGSMVES) are disordered.

As to quaternary structure, efficient DNA binding requires dimerization with another bHLH protein. Skeletal muscle.

Its subcellular location is the nucleus. Functionally, involved in muscle differentiation (myogenic factor). Induces fibroblasts to differentiate into myoblasts. Probable sequence specific DNA-binding protein. This Gallus gallus (Chicken) protein is Myogenic factor 6 (MYF6).